Consider the following 485-residue polypeptide: Aspartyl/glutamyl-tRNA(Asn/Gln) amidotransferase subunit B (485 aa).

It belongs to the GatB/GatE family. GatB subfamily. Heterotrimer of A, B and C subunits.

It carries out the reaction L-glutamyl-tRNA(Gln) + L-glutamine + ATP + H2O = L-glutaminyl-tRNA(Gln) + L-glutamate + ADP + phosphate + H(+). It catalyses the reaction L-aspartyl-tRNA(Asn) + L-glutamine + ATP + H2O = L-asparaginyl-tRNA(Asn) + L-glutamate + ADP + phosphate + 2 H(+). In terms of biological role, allows the formation of correctly charged Asn-tRNA(Asn) or Gln-tRNA(Gln) through the transamidation of misacylated Asp-tRNA(Asn) or Glu-tRNA(Gln) in organisms which lack either or both of asparaginyl-tRNA or glutaminyl-tRNA synthetases. The reaction takes place in the presence of glutamine and ATP through an activated phospho-Asp-tRNA(Asn) or phospho-Glu-tRNA(Gln). In Cupriavidus pinatubonensis (strain JMP 134 / LMG 1197) (Cupriavidus necator (strain JMP 134)), this protein is Aspartyl/glutamyl-tRNA(Asn/Gln) amidotransferase subunit B.